Here is a 570-residue protein sequence, read N- to C-terminus: MGNWVVNEGISIFVILVWLGMNVFLFVWYYRVYDIPDKFFYTRKLLGSALALARAPAACLNFNCMLILLPVCRNLLSFLRGSSACCSTRIRRQLDRNLTFHKMVAWMIALHTAIHTIAHLFNVEWCVNARVNNSDPYSIALSDIGDKPNETYLNFVRQRIKNPEGGLYVAVTRLAGITGVVITLCLILIITSSTKTIRRSYFEVFWYTHHLFVIFFIGLAIHGAQRIVRGQTAESLLKHQPRNCYQNISQWGKIENCPIPEFSGNPPMTWKWIVGPMFLYLCERLVRFWRSQQKVVITKVVTHPFKTIELQMKKKGFKMEVGQYIFVKCPVVSKLEWHPFTLTSAPEEDFFSIHIRIVGDWTEGLFKACGCDKQEFQDAWKLPKIAVDGPFGTASEDVFSYEVVMLVGAGIGVTPFASILKSVWYKYCNKAPNLRLKKIYFYWLCRDTHAFEWFADLLQLLETQMQEKNNTDFLSYNICLTGWDESQASHFAMHHDEEKDVITGLKQKTLYGRPNWDNEFKTIGSQHPNTRIGVFLCGPEALADTLNKQCISNSDSGPRGVHFIFNKENF.

The Cytoplasmic portion of the chain corresponds to 2-9; it reads GNWVVNEG. A helical transmembrane segment spans residues 10–36; it reads ISIFVILVWLGMNVFLFVWYYRVYDIP. At 37–46 the chain is on the extracellular side; the sequence is DKFFYTRKLL. Residues 47–72 traverse the membrane as a helical segment; sequence GSALALARAPAACLNFNCMLILLPVC. One can recognise a Ferric oxidoreductase domain in the interval 54–286; sequence RAPAACLNFN…MFLYLCERLV (233 aa). Residues 73–95 are Cytoplasmic-facing; the sequence is RNLLSFLRGSSACCSTRIRRQLD. A helical membrane pass occupies residues 96–130; it reads RNLTFHKMVAWMIALHTAIHTIAHLFNVEWCVNAR. Heme b is bound by residues H101 and H115. The Extracellular portion of the chain corresponds to 131–163; the sequence is VNNSDPYSIALSDIGDKPNETYLNFVRQRIKNP. N-linked (GlcNAc...) asparagine glycosylation is found at N132 and N149. Residue K161 forms a Glycyl lysine isopeptide (Lys-Gly) (interchain with G-Cter in ubiquitin) linkage. A helical transmembrane segment spans residues 164–194; that stretch reads EGGLYVAVTRLAGITGVVITLCLILIITSST. The Cytoplasmic segment spans residues 195-203; sequence KTIRRSYFE. Residues R199 and S200 each contribute to the FAD site. A helical transmembrane segment spans residues 204–222; sequence VFWYTHHLFVIFFIGLAIH. Residues W206, H209, H222, R226, and I227 each contribute to the heme b site. Residues 223 to 267 are Extracellular-facing; the sequence is GAQRIVRGQTAESLLKHQPRNCYQNISQWGKIENCPIPEFSGNPP. An N-linked (GlcNAc...) asparagine glycan is attached at N247. Residues M268, Y280, and R287 each coordinate heme b. A helical transmembrane segment spans residues 268-285; that stretch reads MTWKWIVGPMFLYLCERL. Residues 286-570 lie on the Cytoplasmic side of the membrane; sequence VRFWRSQQKV…VHFIFNKENF (285 aa). Positions 287 to 397 constitute an FAD-binding FR-type domain; that stretch reads RFWRSQQKVV…DGPFGTASED (111 aa). Glycyl lysine isopeptide (Lys-Gly) (interchain with G-Cter in ubiquitin) cross-links involve residues K294, K299, K306, K328, and K334. Residues W337, H338, P339, T341, H354, R356, W361, and T362 each contribute to the FAD site. A Glycyl lysine isopeptide (Lys-Gly) (interchain with G-Cter in ubiquitin) cross-link involves residue K381. Residues I411, R446, and T481 each contribute to the NADPH site. K506 is covalently cross-linked (Glycyl lysine isopeptide (Lys-Gly) (interchain with G-Cter in ubiquitin)). R513 lines the NADPH pocket. K567 participates in a covalent cross-link: Glycyl lysine isopeptide (Lys-Gly) (interchain with G-Cter in ubiquitin).

Component of the phagocyte NADPH oxidase core complex/cytochrome b558 complex, composed of CYBB (heavy chain (beta)) and CYBA (light chain (alpha)). Component of the phagocyte NADPH oxidase complex composed of an obligatory core heterodimer formed by the membrane proteins CYBA and CYBB and the cytosolic regulatory subunits NCF1/p47-phox, NCF2/p67-phox, NCF4/p40-phox and the small GTPase RAC1 or RAC2. Interacts with NCF1 (phosphorylated form). Interacts with NCF2; the interaction is enhanced in the presence of GBP7. Interacts with RAC2. Interacts with RAC1. Interacts with calprotectin (S100A8/9). Interacts with NRROS; the interaction is direct and impairs formation of a stable NADPH oxidase complex. Interacts with CYBC1; CYBC1 may act as a chaperone stabilizing Cytochrome b-245 heterodimer. The CYBA-CYBB complex interacts with GBP7. FAD is required as a cofactor. Post-translationally, glycosylated. Phosphorylated on Ser and Thr residues by PKC during neutrophils activation. Phosphorylation enhances the NADPH oxidase activity and stimulates its interaction with RAC2, NCF2/p67-phox, and NCF1/p47-phox. In terms of processing, undergoes 'Lys-48'-linked polyubiquitination, likely by RNF145, triggering endoplasmic reticulum-associated degradation.

It localises to the cell membrane. The enzyme catalyses NADPH + 2 O2 = 2 superoxide + NADP(+) + H(+). Its function is as follows. Catalytic subunit of the phagocyte NADPH oxidase complex that mediates the transfer of electrons from cytosolic NADPH to O2 to produce the superoxide anion (O2(-)). In the activated complex, electrons are first transferred from NADPH to flavin adenine dinucleotide (FAD) and subsequently transferred via two heme molecules to molecular oxygen, producing superoxide through an outer-sphere reaction. Activation of the NADPH oxidase complex is initiated by the assembly of cytosolic subunits of the NADPH oxidase complex with the core NADPH oxidase complex to form a complex at the plasma membrane or phagosomal membrane. This activation process is initiated by phosphorylation dependent binding of the cytosolic NCF1/p47-phox subunit to the C-terminus of CYBA/p22-phox. NADPH oxidase complex assembly is impaired through interaction with NRROS. The polypeptide is NADPH oxidase 2 (Bos taurus (Bovine)).